Reading from the N-terminus, the 298-residue chain is Small ribosomal subunit biogenesis GTPase RsgA 1 (298 aa).

The 162-residue stretch at 63-224 folds into the CP-type G domain; it reads QTQLVRPPVA…VADTPGFSSY (162 aa). GTP is bound by residues 112–115 and 167–175; these read AKTD and GQTGAGKST. Zn(2+) is bound by residues Cys-248, Cys-253, His-255, and Cys-261.

This sequence belongs to the TRAFAC class YlqF/YawG GTPase family. RsgA subfamily. As to quaternary structure, monomer. Associates with 30S ribosomal subunit, binds 16S rRNA. Zn(2+) serves as cofactor.

It is found in the cytoplasm. In terms of biological role, one of several proteins that assist in the late maturation steps of the functional core of the 30S ribosomal subunit. Helps release RbfA from mature subunits. May play a role in the assembly of ribosomal proteins into the subunit. Circularly permuted GTPase that catalyzes slow GTP hydrolysis, GTPase activity is stimulated by the 30S ribosomal subunit. In Lactiplantibacillus plantarum (strain ATCC BAA-793 / NCIMB 8826 / WCFS1) (Lactobacillus plantarum), this protein is Small ribosomal subunit biogenesis GTPase RsgA 1.